The sequence spans 37 residues: Protein YhiY (37 aa).

The polypeptide is Protein YhiY (Escherichia coli (strain K12)).